We begin with the raw amino-acid sequence, 247 residues long: Cytochrome c oxidase subunit 2 (247 aa).

At 12 to 38 (DVPTPWGLYFQDSSTPNQEGIIELHDN) the chain is on the mitochondrial intermembrane side. A helical membrane pass occupies residues 39-59 (IMFYLVLILCTVSWLLFSIVK). The Mitochondrial matrix segment spans residues 60-78 (DSSKNPLPHKYLVHGQTIE). A helical transmembrane segment spans residues 79–101 (IIWTILPAVVLLIIAFPSFILLY). Over 102–247 (LCDEVISPAM…KEFLTWLNEQ (146 aa)) the chain is Mitochondrial intermembrane. Positions 182, 217, 219, 221, 225, and 228 each coordinate Cu cation. Residue E219 participates in Mg(2+) binding.

The protein belongs to the cytochrome c oxidase subunit 2 family. As to quaternary structure, component of the cytochrome c oxidase (complex IV, CIV), a multisubunit enzyme composed of a catalytic core of 3 subunits and several supernumerary subunits. The complex exists as a monomer or a dimer and forms supercomplexes (SCs) in the inner mitochondrial membrane with ubiquinol-cytochrome c oxidoreductase (cytochrome b-c1 complex, complex III, CIII). It depends on Cu cation as a cofactor. In terms of processing, the signal sequence of COX2 is processed by IMP1.

The protein localises to the mitochondrion inner membrane. The enzyme catalyses 4 Fe(II)-[cytochrome c] + O2 + 8 H(+)(in) = 4 Fe(III)-[cytochrome c] + 2 H2O + 4 H(+)(out). Its function is as follows. Component of the cytochrome c oxidase, the last enzyme in the mitochondrial electron transport chain which drives oxidative phosphorylation. The respiratory chain contains 3 multisubunit complexes succinate dehydrogenase (complex II, CII), ubiquinol-cytochrome c oxidoreductase (cytochrome b-c1 complex, complex III, CIII) and cytochrome c oxidase (complex IV, CIV), that cooperate to transfer electrons derived from NADH and succinate to molecular oxygen, creating an electrochemical gradient over the inner membrane that drives transmembrane transport and the ATP synthase. Cytochrome c oxidase is the component of the respiratory chain that catalyzes the reduction of oxygen to water. Electrons originating from reduced cytochrome c in the intermembrane space (IMS) are transferred via the dinuclear copper A center (CU(A)) of subunit 2 and heme A of subunit 1 to the active site in subunit 1, a binuclear center (BNC) formed by heme A3 and copper B (CU(B)). The BNC reduces molecular oxygen to 2 water molecules using 4 electrons from cytochrome c in the IMS and 4 protons from the mitochondrial matrix. The protein is Cytochrome c oxidase subunit 2 (COX2) of Cyberlindnera saturnus (Yeast).